Here is a 1001-residue protein sequence, read N- to C-terminus: Phosphatidylinositol 4,5-bisphosphate 5-phosphatase A (1001 aa).

Polar residues predominate over residues methionine 1–serine 12. 2 disordered regions span residues methionine 1 to valine 130 and serine 144 to cysteine 412. An RSXSXX motif 1 motif is present at residues arginine 6–lysine 11. The span at glycine 13–leucine 28 shows a compositional bias: low complexity. Positions glutamine 29–glutamine 42 are enriched in polar residues. Arginine 56 carries the post-translational modification Asymmetric dimethylarginine; alternate. Arginine 56 is subject to Omega-N-methylarginine; alternate. Arginine 65 carries the post-translational modification Omega-N-methylarginine. At arginine 76 the chain carries Asymmetric dimethylarginine. An Asymmetric dimethylarginine; alternate modification is found at arginine 83. Arginine 83 is subject to Omega-N-methylarginine; alternate. Polar residues predominate over residues serine 161 to serine 174. Phosphoserine is present on serine 171. Over residues alanine 180–proline 196 the composition is skewed to low complexity. The segment covering proline 197–valine 210 has biased composition (pro residues). Basic and acidic residues predominate over residues alanine 284–glutamate 294. Serine 292 and serine 325 each carry phosphoserine. Positions valine 338 to serine 348 are enriched in pro residues. The short motif at proline 346–arginine 351 is the SH3-binding element. Low complexity-rich tracts occupy residues proline 349–proline 361 and serine 394–threonine 411. The RSXSXX motif 2 motif lies at arginine 351–serine 356. Positions isoleucine 420–phenylalanine 723 are catalytic. The interval leucine 724 to serine 835 is required for ruffle localization. Residues proline 837–proline 1001 form a disordered region. The segment covering threonine 838–serine 853 has biased composition (low complexity). 2 consecutive short sequence motifs (RSXSXX motif) follow at residues arginine 869–glycine 874 and arginine 880–glycine 885. At serine 898 the chain carries Phosphoserine. Composition is skewed to low complexity over residues serine 905–arginine 917 and serine 925–proline 936. Positions arginine 906 to glutamine 911 match the RSXSXX motif 5 motif. Residues serine 937–valine 949 show a composition bias toward pro residues. Serine 985 is subject to Phosphoserine.

The protein belongs to the inositol 1,4,5-trisphosphate 5-phosphatase type II family. Phosphorylated on Ser/Thr residues. As to expression, expressed in heart, brain, kidney, stomach, small intestine and lung. Not expressed in spleen, thymus, skeletal muscle, testis and skin.

It localises to the cytoplasm. The catalysed reaction is 1D-myo-inositol 1,4,5-trisphosphate + H2O = 1D-myo-inositol 1,4-bisphosphate + phosphate. It carries out the reaction 1D-myo-inositol 1,3,4,5-tetrakisphosphate + H2O = 1D-myo-inositol 1,3,4-trisphosphate + phosphate. The enzyme catalyses a 1,2-diacyl-sn-glycero-3-phospho-(1D-myo-inositol-4,5-bisphosphate) + H2O = a 1,2-diacyl-sn-glycero-3-phospho-(1D-myo-inositol 4-phosphate) + phosphate. Its function is as follows. Inositol 5-phosphatase, which converts inositol 1,4,5-trisphosphate to inositol 1,4-bisphosphate. Also converts phosphatidylinositol 4,5-bisphosphate to phosphatidylinositol 4-phosphate and inositol 1,3,4,5-tetrakisphosphate to inositol 1,3,4-trisphosphate in vitro. May be involved in modulation of the function of inositol and phosphatidylinositol polyphosphate-binding proteins that are present at membranes ruffles. In Rattus norvegicus (Rat), this protein is Phosphatidylinositol 4,5-bisphosphate 5-phosphatase A (Inpp5j).